A 553-amino-acid chain; its full sequence is Dihydroxy-acid dehydratase (553 aa).

D78 serves as a coordination point for Mg(2+). Residue C119 participates in [2Fe-2S] cluster binding. Mg(2+)-binding residues include D120 and K121. K121 bears the N6-carboxylysine mark. C191 provides a ligand contact to [2Fe-2S] cluster. Residue E442 coordinates Mg(2+). S468 functions as the Proton acceptor in the catalytic mechanism.

This sequence belongs to the IlvD/Edd family. In terms of assembly, homodimer. [2Fe-2S] cluster is required as a cofactor. Requires Mg(2+) as cofactor.

The catalysed reaction is (2R)-2,3-dihydroxy-3-methylbutanoate = 3-methyl-2-oxobutanoate + H2O. It catalyses the reaction (2R,3R)-2,3-dihydroxy-3-methylpentanoate = (S)-3-methyl-2-oxopentanoate + H2O. The protein operates within amino-acid biosynthesis; L-isoleucine biosynthesis; L-isoleucine from 2-oxobutanoate: step 3/4. Its pathway is amino-acid biosynthesis; L-valine biosynthesis; L-valine from pyruvate: step 3/4. Functions in the biosynthesis of branched-chain amino acids. Catalyzes the dehydration of (2R,3R)-2,3-dihydroxy-3-methylpentanoate (2,3-dihydroxy-3-methylvalerate) into 2-oxo-3-methylpentanoate (2-oxo-3-methylvalerate) and of (2R)-2,3-dihydroxy-3-methylbutanoate (2,3-dihydroxyisovalerate) into 2-oxo-3-methylbutanoate (2-oxoisovalerate), the penultimate precursor to L-isoleucine and L-valine, respectively. In Carboxydothermus hydrogenoformans (strain ATCC BAA-161 / DSM 6008 / Z-2901), this protein is Dihydroxy-acid dehydratase.